The following is a 269-amino-acid chain: Cytochrome c oxidase subunit 3 (269 aa).

Residues 1-22 lie on the Mitochondrial matrix side of the membrane; the sequence is MTHLERSRHQQHPFHMVMPSPW. The chain crosses the membrane as a helical span at residues 23–41; that stretch reads PIVVSFALLSLALSTALTM. The Mitochondrial intermembrane segment spans residues 42 to 48; the sequence is HGYIGNM. A helical transmembrane segment spans residues 49–73; that stretch reads NMVYLALFVLLTSSILWFRDIVAEA. The Mitochondrial matrix portion of the chain corresponds to 74–80; that stretch reads TYLGDHT. Residues 81 to 114 form a helical membrane-spanning segment; sequence MAVRKGINLGFLMFVLSEVLIFAGLFWAYFHSAM. Topologically, residues 115–137 are mitochondrial intermembrane; the sequence is SPDVTLGACWPPVGIEAVQPTEL. The chain crosses the membrane as a helical span at residues 138 to 161; sequence PLLNTIILLSSGATVTYSHHALIA. The Mitochondrial matrix segment spans residues 162-164; the sequence is GNR. Residues 165–188 traverse the membrane as a helical segment; the sequence is NKALSGLLITFWLIVIFVTCQYIE. The Mitochondrial intermembrane portion of the chain corresponds to 189–201; it reads YTNAAFTISDGVY. A helical membrane pass occupies residues 202 to 230; the sequence is GSVFYAGTGLHFLHMVMLAAMLGVNYWRM. Over 231–248 the chain is Mitochondrial matrix; sequence RNYHLTAGHHVGYETTII. A helical membrane pass occupies residues 249–265; that stretch reads YTHVLDVIWLFLYVVFY. Over 266 to 269 the chain is Mitochondrial intermembrane; that stretch reads WWGV.

The protein belongs to the cytochrome c oxidase subunit 3 family. As to quaternary structure, component of the cytochrome c oxidase (complex IV, CIV), a multisubunit enzyme composed of 12 subunits. The complex is composed of a catalytic core of 3 subunits COX1, COX2 and COX3, encoded in the mitochondrial DNA, and 9 supernumerary subunits COX4, COX5A (or COX5B), COX6, COX7, COX8, COX9, COX12, COX13 and COX26, which are encoded in the nuclear genome. The complex exists as a monomer or a dimer and forms supercomplexes (SCs) in the inner mitochondrial membrane with a dimer of ubiquinol-cytochrome c oxidoreductase (cytochrome b-c1 complex, complex III, CIII), resulting in 2 different assemblies (supercomplexes III(2)IV and III(2)IV(2)). Post-translationally, the N-terminus is blocked.

The protein resides in the mitochondrion inner membrane. It catalyses the reaction 4 Fe(II)-[cytochrome c] + O2 + 8 H(+)(in) = 4 Fe(III)-[cytochrome c] + 2 H2O + 4 H(+)(out). Component of the cytochrome c oxidase, the last enzyme in the mitochondrial electron transport chain which drives oxidative phosphorylation. The respiratory chain contains 3 multisubunit complexes succinate dehydrogenase (complex II, CII), ubiquinol-cytochrome c oxidoreductase (cytochrome b-c1 complex, complex III, CIII) and cytochrome c oxidase (complex IV, CIV), that cooperate to transfer electrons derived from NADH and succinate to molecular oxygen, creating an electrochemical gradient over the inner membrane that drives transmembrane transport and the ATP synthase. Cytochrome c oxidase is the component of the respiratory chain that catalyzes the reduction of oxygen to water. Electrons originating from reduced cytochrome c in the intermembrane space (IMS) are transferred via the dinuclear copper A center (CU(A)) of COX2 and heme A of COX1 to the active site in COX1, a binuclear center (BNC) formed by heme A3 and copper B (CU(B)). The BNC reduces molecular oxygen to 2 water molecules using 4 electrons from cytochrome c in the IMS and 4 protons from the mitochondrial matrix. COX3 is a catalytic core subunit. The chain is Cytochrome c oxidase subunit 3 (COX3) from Saccharomyces cerevisiae (strain ATCC 204508 / S288c) (Baker's yeast).